The primary structure comprises 498 residues: Resveratrol cleavage oxygenase 1 (498 aa).

Residues Tyr-105 and Lys-136 each coordinate piceatannol. Trans-resveratrol-binding residues include Tyr-105 and Lys-136. Residues His-169, His-220, and His-285 each contribute to the Fe cation site. Residue Glu-355 coordinates piceatannol. Glu-355 contributes to the trans-resveratrol binding site. Residue His-481 participates in Fe cation binding.

The protein belongs to the carotenoid oxygenase family. It depends on Fe(2+) as a cofactor.

It carries out the reaction trans-resveratrol + O2 = 3,5-dihydroxybenzaldehyde + 4-hydroxybenzaldehyde. The enzyme catalyses piceatannol + O2 = 3,5-dihydroxybenzaldehyde + 3,4-dihydroxybenzaldehyde. In terms of biological role, dioxygenase that cleaves the interphenyl C-alpha-C-beta double bond of resveratrol to yield 3,5-dihydroxybenzaldehyde and 4-hydroxybenzaldehyde. Also cleaves piceatannol, a compound that differs from resveratrol only in the occurrence of an additional hydroxyl group, which leads to the production of 3,4-dihydroxybenzaldehyde and 3,5-hydroxybenzaldehyde. This Aspergillus fumigatus (strain ATCC MYA-4609 / CBS 101355 / FGSC A1100 / Af293) (Neosartorya fumigata) protein is Resveratrol cleavage oxygenase 1.